The sequence spans 391 residues: Processive diacylglycerol beta-glucosyltransferase (391 aa).

This sequence belongs to the glycosyltransferase 28 family. UgtP subfamily.

It localises to the cell membrane. It catalyses the reaction a 1,2-diacyl-3-O-(beta-D-glucopyranosyl)-sn-glycerol + UDP-alpha-D-glucose = a 1,2-diacyl-3-O-(beta-D-Glc-(1-&gt;6)-beta-D-Glc)-sn-glycerol + UDP + H(+). The enzyme catalyses a 1,2-diacyl-sn-glycerol + UDP-alpha-D-glucose = a 1,2-diacyl-3-O-(beta-D-glucopyranosyl)-sn-glycerol + UDP + H(+). The protein operates within glycolipid metabolism; diglucosyl-diacylglycerol biosynthesis. In terms of biological role, processive glucosyltransferase involved in the biosynthesis of both the bilayer- and non-bilayer-forming membrane glucolipids. Is able to successively transfer two glucosyl residues to diacylglycerol (DAG), thereby catalyzing the formation of beta-monoglucosyl-DAG (3-O-(beta-D-glucopyranosyl)-1,2-diacyl-sn-glycerol) and beta-diglucosyl-DAG (3-O-(beta-D-glucopyranosyl-beta-(1-&gt;6)-D-glucopyranosyl)-1,2-diacyl-sn-glycerol). Beta-diglucosyl-DAG is the predominant glycolipid found in Bacillales and is also used as a membrane anchor for lipoteichoic acid (LTA). The sequence is that of Processive diacylglycerol beta-glucosyltransferase from Staphylococcus haemolyticus (strain JCSC1435).